We begin with the raw amino-acid sequence, 74 residues long: ATP synthase subunit c (74 aa).

2 helical membrane passes run 13–33 (ISVIALAGVGLGIGNIFASLI) and 51–71 (ILGFALTEAVALFALLIAFLI).

It belongs to the ATPase C chain family. In terms of assembly, F-type ATPases have 2 components, F(1) - the catalytic core - and F(0) - the membrane proton channel. F(1) has five subunits: alpha(3), beta(3), gamma(1), delta(1), epsilon(1). F(0) has three main subunits: a(1), b(2) and c(10-14). The alpha and beta chains form an alternating ring which encloses part of the gamma chain. F(1) is attached to F(0) by a central stalk formed by the gamma and epsilon chains, while a peripheral stalk is formed by the delta and b chains.

Its subcellular location is the cell inner membrane. Its function is as follows. F(1)F(0) ATP synthase produces ATP from ADP in the presence of a proton or sodium gradient. F-type ATPases consist of two structural domains, F(1) containing the extramembraneous catalytic core and F(0) containing the membrane proton channel, linked together by a central stalk and a peripheral stalk. During catalysis, ATP synthesis in the catalytic domain of F(1) is coupled via a rotary mechanism of the central stalk subunits to proton translocation. Key component of the F(0) channel; it plays a direct role in translocation across the membrane. A homomeric c-ring of between 10-14 subunits forms the central stalk rotor element with the F(1) delta and epsilon subunits. This chain is ATP synthase subunit c, found in Granulibacter bethesdensis (strain ATCC BAA-1260 / CGDNIH1).